Reading from the N-terminus, the 1088-residue chain is PAN2-PAN3 deadenylation complex catalytic subunit pan2 (1088 aa).

WD repeat units lie at residues 16-56, 136-175, 178-224, and 270-309; these read VSTC…YTQF, HKDK…PVNK, AHTG…SLVP, and PLTS…SFSD. The segment at 309–443 is linker; sequence DLKLPIQLPN…EDTISGPDSI (135 aa). The 372-residue stretch at 443–814 folds into the USP domain; that stretch reads IPKFYQRPVI…IPIIVYYEKL (372 aa). Residues 860–1033 enclose the Exonuclease domain; it reads VGIDSEFVAL…EDALTALKLY (174 aa). A divalent metal cation contacts are provided by Asp863, Glu865, Asp972, and Asp1025.

It belongs to the peptidase C19 family. PAN2 subfamily. Forms a heterotrimer with an asymmetric homodimer of the regulatory subunit ppk26/pan3 to form the poly(A)-nuclease (PAN) deadenylation complex. A divalent metal cation is required as a cofactor.

The protein localises to the cytoplasm. The enzyme catalyses Exonucleolytic cleavage of poly(A) to 5'-AMP.. Its activity is regulated as follows. Positively regulated by the regulatory subunit ppk26/pan3. Catalytic subunit of the poly(A)-nuclease (PAN) deadenylation complex, one of two cytoplasmic mRNA deadenylases involved in mRNA turnover. PAN specifically shortens poly(A) tails of RNA and the activity is stimulated by poly(A)-binding protein pab1. PAN deadenylation is followed by rapid degradation of the shortened mRNA tails by the CCR4-NOT complex. Deadenylated mRNAs are then degraded by two alternative mechanisms, namely exosome-mediated 3'-5' exonucleolytic degradation, or deadenylation-dependent mRNA decaping and subsequent 5'-3' exonucleolytic degradation by xrn1. May also be involved in post-transcriptional maturation of mRNA poly(A) tails. The chain is PAN2-PAN3 deadenylation complex catalytic subunit pan2 from Schizosaccharomyces pombe (strain 972 / ATCC 24843) (Fission yeast).